A 362-amino-acid chain; its full sequence is Probable dual-specificity RNA methyltransferase RlmN (362 aa).

E105 acts as the Proton acceptor in catalysis. The Radical SAM core domain occupies 111 to 344 (HEYGNSICVT…VTIRREQGHD (234 aa)). A disulfide bridge links C118 with C349. The [4Fe-4S] cluster site is built by C125, C129, and C132. Residues 175 to 176 (GE), S207, 230 to 232 (SLH), and N306 contribute to the S-adenosyl-L-methionine site. C349 acts as the S-methylcysteine intermediate in catalysis.

Belongs to the radical SAM superfamily. RlmN family. Requires [4Fe-4S] cluster as cofactor.

It is found in the cytoplasm. It catalyses the reaction adenosine(2503) in 23S rRNA + 2 reduced [2Fe-2S]-[ferredoxin] + 2 S-adenosyl-L-methionine = 2-methyladenosine(2503) in 23S rRNA + 5'-deoxyadenosine + L-methionine + 2 oxidized [2Fe-2S]-[ferredoxin] + S-adenosyl-L-homocysteine. The catalysed reaction is adenosine(37) in tRNA + 2 reduced [2Fe-2S]-[ferredoxin] + 2 S-adenosyl-L-methionine = 2-methyladenosine(37) in tRNA + 5'-deoxyadenosine + L-methionine + 2 oxidized [2Fe-2S]-[ferredoxin] + S-adenosyl-L-homocysteine. Specifically methylates position 2 of adenine 2503 in 23S rRNA and position 2 of adenine 37 in tRNAs. The sequence is that of Probable dual-specificity RNA methyltransferase RlmN from Bacillus thuringiensis subsp. konkukian (strain 97-27).